A 364-amino-acid chain; its full sequence is D-alanine--D-alanine ligase (364 aa).

The region spanning 145–354 (KMAFEQAGLP…FPELVDKLVQ (210 aa)) is the ATP-grasp domain. 181–236 (EASLGYPCFVKPANLGSSVGISKVRSRQELEDALDNAANYDRRIIIEAGVAAREVE) provides a ligand contact to ATP. Mg(2+)-binding residues include aspartate 307, glutamate 321, and asparagine 323.

Belongs to the D-alanine--D-alanine ligase family. It depends on Mg(2+) as a cofactor. Requires Mn(2+) as cofactor.

Its subcellular location is the cytoplasm. It catalyses the reaction 2 D-alanine + ATP = D-alanyl-D-alanine + ADP + phosphate + H(+). It functions in the pathway cell wall biogenesis; peptidoglycan biosynthesis. Cell wall formation. This is D-alanine--D-alanine ligase from Nostoc sp. (strain PCC 7120 / SAG 25.82 / UTEX 2576).